Here is a 694-residue protein sequence, read N- to C-terminus: Elongation factor G (694 aa).

In terms of domain architecture, tr-type G spans 10 to 285 (EKTRNIGIMA…GVVDYLPSPL (276 aa)). Residues 19 to 26 (AHIDAGKT), 83 to 87 (DTPGH), and 137 to 140 (NKMD) contribute to the GTP site.

It belongs to the TRAFAC class translation factor GTPase superfamily. Classic translation factor GTPase family. EF-G/EF-2 subfamily.

It is found in the cytoplasm. Its function is as follows. Catalyzes the GTP-dependent ribosomal translocation step during translation elongation. During this step, the ribosome changes from the pre-translocational (PRE) to the post-translocational (POST) state as the newly formed A-site-bound peptidyl-tRNA and P-site-bound deacylated tRNA move to the P and E sites, respectively. Catalyzes the coordinated movement of the two tRNA molecules, the mRNA and conformational changes in the ribosome. In Lactobacillus delbrueckii subsp. bulgaricus (strain ATCC 11842 / DSM 20081 / BCRC 10696 / JCM 1002 / NBRC 13953 / NCIMB 11778 / NCTC 12712 / WDCM 00102 / Lb 14), this protein is Elongation factor G.